The sequence spans 610 residues: Protein arginine N-methyltransferase 5 (610 aa).

The region spanning 284 to 587 (LEIPLQPLCD…VDATKVWYEW (304 aa)) is the SAM-dependent MTase PRMT-type domain. Residue tyrosine 300 coordinates S-adenosyl-L-methionine. Phenylalanine 303 serves as a coordination point for a protein. Residues 309–310 (KY), glutamate 368, and 396–397 (DM) contribute to the S-adenosyl-L-methionine site. A protein is bound by residues glutamate 412 and glutamate 421. Active-site proton donor/acceptor residues include glutamate 412 and glutamate 421. Residues 470–610 (AFDYGYVSLL…TRGTGYNMRL (141 aa)) form an interaction with vls region.

It belongs to the class I-like SAM-binding methyltransferase superfamily. Protein arginine N-methyltransferase family. Interacts with vls. In terms of tissue distribution, expressed only in ovaries.

Its subcellular location is the cytoplasm. In terms of biological role, arginine methyltransferase that can both catalyze the formation of omega-N monomethylarginine (MMA) and symmetrical dimethylarginine (sDMA). Specifically mediates the symmetrical dimethylation of arginine residues in the small nuclear ribonucleoproteins SmD1 and SmD3. Required for arginine symmetrical dimethylation of piwi family proteins, piwi, aub and AGO3, during germline development. Required during oogenesis for pole cell formation in the pathway controlled by oskar (osk) and for abdominal segments during early embryogenesis. Involved in nanos (nos) and germ cell mRNAs localization. This Drosophila melanogaster (Fruit fly) protein is Protein arginine N-methyltransferase 5.